A 199-amino-acid chain; its full sequence is ATP-dependent Clp protease proteolytic subunit 2 (199 aa).

The active-site Nucleophile is S98. Residue H123 is part of the active site.

It belongs to the peptidase S14 family. Fourteen ClpP subunits assemble into 2 heptameric rings which stack back to back to give a disk-like structure with a central cavity, resembling the structure of eukaryotic proteasomes.

The protein localises to the cytoplasm. The enzyme catalyses Hydrolysis of proteins to small peptides in the presence of ATP and magnesium. alpha-casein is the usual test substrate. In the absence of ATP, only oligopeptides shorter than five residues are hydrolyzed (such as succinyl-Leu-Tyr-|-NHMec, and Leu-Tyr-Leu-|-Tyr-Trp, in which cleavage of the -Tyr-|-Leu- and -Tyr-|-Trp bonds also occurs).. Cleaves peptides in various proteins in a process that requires ATP hydrolysis. Has a chymotrypsin-like activity. Plays a major role in the degradation of misfolded proteins. The polypeptide is ATP-dependent Clp protease proteolytic subunit 2 (Corynebacterium efficiens (strain DSM 44549 / YS-314 / AJ 12310 / JCM 11189 / NBRC 100395)).